A 677-amino-acid polypeptide reads, in one-letter code: Polyunsaturated fatty acid lipoxygenase ALOX8 (677 aa).

Residues A2–K125 form the PLAT domain. Residues G15, G17, D39, H40, G42, E44, D86, and A87 each contribute to the Ca(2+) site. One can recognise a Lipoxygenase domain in the interval V126–I677. H374, H379, H554, and I677 together coordinate Fe cation.

This sequence belongs to the lipoxygenase family. Fe cation is required as a cofactor. In terms of tissue distribution, expressed in epidermis and brain. No expression found in heart, spleen, liver, skeletal muscle, kidney or testis.

It localises to the cytoplasm. It is found in the cytosol. The protein resides in the membrane. The enzyme catalyses (9Z,12Z)-octadecadienoate + O2 = (9S)-hydroperoxy-(10E,12Z)-octadecadienoate. It carries out the reaction (5Z,8Z,11Z,14Z)-eicosatetraenoate + O2 = (8S)-hydroperoxy-(5Z,9E,11Z,14Z)-eicosatetraenoate. The catalysed reaction is (15S)-hydroperoxy-(5Z,8Z,11Z,13E)-eicosatetraenoate + O2 = (8S,15S)-dihydroperoxy-(5Z,9E,11Z,13E)-eicosatetraenoate. It catalyses the reaction (8S)-hydroperoxy-(5Z,9E,11Z,14Z)-eicosatetraenoate + O2 = (8S,15S)-dihydroperoxy-(5Z,9E,11Z,13E)-eicosatetraenoate. The enzyme catalyses 1-octadecanoyl-2-(5Z,8Z,11Z,14Z-eicosatetraenoyl)-sn-glycero-3-phosphocholine + O2 = 1-octadecanoyl-2-(15-hydroperoxy-5Z,8Z,11Z,13E-eicosatetraenoyl)-sn-glycero-3-phosphocholine. It carries out the reaction a 1-acyl-2-(5Z,8Z,11Z,14Z-eicosatetraenoyl)-sn-glycero-3-phospho-(1D-myo-inositol) + O2 = a 1-acyl-2-(15-hydroperoxy-5Z,8Z,11Z,13E-eicosatetraenoyl)-sn-glycero-3-phospho-(1D-myo-inositol). The catalysed reaction is a 1-acyl-2-(8Z,11Z,14Z-eicosatrienoyl)-sn-glycero-3-phospho-(1D-myo-inositol) + O2 = a 1-acyl-2-(15-hydroperoxy-8Z,11Z,13E-eicosatrienoyl)-sn-glycero-3-phospho-(1D-myo-inositol). It catalyses the reaction (5Z,8Z,11Z,14Z)-eicosatetraenoate + O2 = 9-hydroperoxy-(5Z,7E,11Z,14Z)-eicosatetraenoate. The enzyme catalyses (5Z,8Z,11Z,14Z)-eicosatetraenoate + O2 = 11-hydroperoxy-(5Z,8Z,12E,14Z)-eicosatetraenoate. It carries out the reaction (8Z,11Z,14Z)-eicosatrienoate + O2 = 15-hydroperoxy-(8Z,11Z,13E)-eicosatrienoate. It participates in lipid metabolism; hydroperoxy eicosatetraenoic acid biosynthesis. In terms of biological role, non-heme iron-containing dioxygenase that catalyzes the stereo-specific peroxidation of free and esterified polyunsaturated fatty acids generating a spectrum of bioactive lipid mediators. Catalyzes the peroxidation of arachidonate and linoleate into (8S)-HPETE and (9S)-HPODE respectively. In addition to generate (8S)-HPETE from free arachidonic acid (AA), may produce other HETE isomers from phospholipid-esterified polyunsaturated fatty acids and minor products derived from (8S)-HPETE itself that may include leukotriene A4 and 8,15-diHPETE. With free arachidonate as substrate, has no detectable 15S-lipoxygenase activity and only displays a 8S-lipoxygenase activity. However may have a 15S-lipoxygenase activity with (8S)-HPETE to produce (8S,15S)-diHPETE and when oxidizes directly arachidonic acid esterified to membrane-bound phospholipids to produce a phospholipid-esterified 15-HpETE. May also catalyze (15S)-HPETE peroxidation to produce 8,15-diHPETE. May play a role in keratinocyte differentiation through activation of the peroxisome proliferator activated receptor signaling pathway. The polypeptide is Polyunsaturated fatty acid lipoxygenase ALOX8 (Mus musculus (Mouse)).